The sequence spans 372 residues: Pyruvylated Gal-beta-1,3-epitope synthesis protein 5 (372 aa).

Residues 1–12 (MGLPLRIFAGNG) lie on the Cytoplasmic side of the membrane. A helical; Signal-anchor for type II membrane protein transmembrane segment spans residues 13-35 (IGGWCLRLFLFGSLILLLRPLIF). Over 36–372 (YSNTTMKKLK…LRIIEQWKQL (337 aa)) the chain is Lumenal. N-linked (GlcNAc...) asparagine glycosylation is found at Asn-38 and Asn-128.

It localises to the golgi apparatus membrane. Involved in cell wall biogenesis. Has a role in the addition of Gal-beta1,3 moeities to galactomannans and their subsequent pyruvylation. Has a role in meiosis. The protein is Pyruvylated Gal-beta-1,3-epitope synthesis protein 5 (pvg5) of Schizosaccharomyces pombe (strain 972 / ATCC 24843) (Fission yeast).